Reading from the N-terminus, the 452-residue chain is UDP-N-acetylmuramoylalanine--D-glutamate ligase (452 aa).

Residue 115–121 (GTNGKTT) coordinates ATP.

Belongs to the MurCDEF family.

Its subcellular location is the cytoplasm. The catalysed reaction is UDP-N-acetyl-alpha-D-muramoyl-L-alanine + D-glutamate + ATP = UDP-N-acetyl-alpha-D-muramoyl-L-alanyl-D-glutamate + ADP + phosphate + H(+). The protein operates within cell wall biogenesis; peptidoglycan biosynthesis. Cell wall formation. Catalyzes the addition of glutamate to the nucleotide precursor UDP-N-acetylmuramoyl-L-alanine (UMA). In Citrifermentans bemidjiense (strain ATCC BAA-1014 / DSM 16622 / JCM 12645 / Bem) (Geobacter bemidjiensis), this protein is UDP-N-acetylmuramoylalanine--D-glutamate ligase.